A 330-amino-acid chain; its full sequence is Putative [LysW]-L-2-aminoadipate/[LysW]-L-glutamate phosphate reductase (330 aa).

NADP(+) contacts are provided by residues 10-13 and 34-36; these read SGYI and SRK. Residue C142 is part of the active site. N297 contributes to the NADP(+) binding site.

This sequence belongs to the NAGSA dehydrogenase family. Type 1 subfamily. LysY sub-subfamily.

It is found in the cytoplasm. The catalysed reaction is [amino-group carrier protein]-C-terminal-N-(1-carboxy-5-oxopentan-1-yl)-L-glutamine + phosphate + NADP(+) = [amino-group carrier protein]-C-terminal-N-(1-carboxy-5-phosphooxy-5-oxopentan-1-yl)-L-glutamine + NADPH + H(+). It carries out the reaction [amino-group carrier protein]-C-terminal-gamma-(L-glutamyl-5-semialdehyde)-L-glutamate + phosphate + NADP(+) = [amino-group carrier protein]-C-terminal-gamma-(5-phospho-L-glutamyl)-L-glutamate + NADPH + H(+). The protein operates within amino-acid biosynthesis; L-lysine biosynthesis via AAA pathway; L-lysine from L-alpha-aminoadipate (Thermus route): step 3/5. It participates in amino-acid biosynthesis; L-arginine biosynthesis. In terms of biological role, involved in both the arginine and lysine biosynthetic pathways. The polypeptide is Putative [LysW]-L-2-aminoadipate/[LysW]-L-glutamate phosphate reductase (Pyrococcus abyssi (strain GE5 / Orsay)).